The following is a 402-amino-acid chain: Propionate kinase (402 aa).

ATP is bound by residues Asn11 and Lys18. Asn11 serves as a coordination point for Mg(2+). Arg86 provides a ligand contact to substrate. Residue Asp143 is the Proton donor/acceptor of the active site. ATP is bound by residues His175, 203 to 207, 278 to 280, and 326 to 330; these read HLGNG, DLR, and GIGEN.

Belongs to the acetokinase family. TdcD subfamily. In terms of assembly, homodimer. It depends on Mg(2+) as a cofactor.

The catalysed reaction is propanoate + ATP = propanoyl phosphate + ADP. The protein operates within amino-acid degradation; L-threonine degradation via propanoate pathway; propanoate from L-threonine: step 4/4. Catalyzes the conversion of propionyl phosphate and ADP to propionate and ATP. The sequence is that of Propionate kinase from Escherichia coli O157:H7.